The sequence spans 465 residues: MAGSSGVIVQVIGPVLDIRFENGILPDIYNAIKIPADSGTVTAEVMQHLGNDTVRCVAMSSTDGLVRGMKAEDTGDAITVPVGKEVLGRIFNVLGEPVDKAGPVEPTAYLPIHREAPSLEEQRPSTEILETGIKVVDLLAPYAKGGKIGLFGGAGVGKTVLIMELIRNIATEHGGYSIFTGVGERTREGNDLWHDMNDSGVIEKTAMVFGQMNEPPGARMRVGLTGLTMAEYFRDQMGQDVLLFIDNIFRFVQAGSEVSALLGRIPSAVGYQPTLATDVGALQERIASTNKGSITSVQAVYVPADDLTDPAPATTFAHLDATTVLSRDIVAMGIYPAVDPLESTSRILDPKVVGEEHYTIARKVQEILQRNKELQDIIAILGMDELPEEDKLTVFRARKIQRYLSQPFFVGEQFTGYKGKYVPIKETIRGFKEIIDGKMDNISEAAFYMKGTIEEVYEAAKEMEG.

152 to 159 (GGAGVGKT) contributes to the ATP binding site.

The protein belongs to the ATPase alpha/beta chains family. As to quaternary structure, F-type ATPases have 2 components, CF(1) - the catalytic core - and CF(0) - the membrane proton channel. CF(1) has five subunits: alpha(3), beta(3), gamma(1), delta(1), epsilon(1). CF(0) has three main subunits: a(1), b(2) and c(9-12). The alpha and beta chains form an alternating ring which encloses part of the gamma chain. CF(1) is attached to CF(0) by a central stalk formed by the gamma and epsilon chains, while a peripheral stalk is formed by the delta and b chains.

It is found in the cell membrane. It catalyses the reaction ATP + H2O + 4 H(+)(in) = ADP + phosphate + 5 H(+)(out). Its function is as follows. Produces ATP from ADP in the presence of a proton gradient across the membrane. The catalytic sites are hosted primarily by the beta subunits. This chain is ATP synthase subunit beta, found in Ruminiclostridium cellulolyticum (strain ATCC 35319 / DSM 5812 / JCM 6584 / H10) (Clostridium cellulolyticum).